The sequence spans 349 residues: GDP-mannose:glycolipid 4-beta-D-mannosyltransferase (349 aa).

The signal sequence occupies residues 1-14 (MSASASLPVTRAAA).

Belongs to the glycosyltransferase 94 family.

The protein resides in the cell inner membrane. The enzyme catalyses beta-D-GlcA-(1-&gt;2)-alpha-D-Man-(1-&gt;3)-beta-D-Glc-(1-&gt;4)-alpha-D-Glc-di-trans,octa-cis-undecaprenyl diphosphate + GDP-alpha-D-mannose = beta-D-Man-(1-&gt;4)-beta-D-GlcA-(1-&gt;2)-alpha-D-Man-(1-&gt;3)-beta-D-Glc-(1-&gt;4)-alpha-D-Glc-di-trans,octa-cis-undecaprenyl diphosphate + GDP + H(+). It functions in the pathway glycan biosynthesis; xanthan biosynthesis. Functionally, nonprocessive beta-mannosyltransferase that catalyzes the transfer of a mannose residue from GDP-mannose to glucuronic acid-beta-1,2-mannose-alpha-1,3-glucose-beta-1,4-glucose-PP-polyisoprenyl to form the lipid-linked pentasaccharide repeating unit of xanthan, Man-GlcA-Man-Glc(2)-PP-Pol. Is involved in the biosynthesis of the exopolysaccharide xanthan. To a lesser extent, can also use ADP-Man and even GDP-Glc as sugar donor substrates in vitro. Is unable to transfer a Man residue to the free-tetrasaccharide GlcA-Man-Glc(2) used as an acceptor, which indicates that the diphosphate group and the lipid moiety in the acceptor substrate are of major importance for acceptor binding and catalysis. This Xanthomonas campestris pv. campestris protein is GDP-mannose:glycolipid 4-beta-D-mannosyltransferase (gumI).